A 151-amino-acid polypeptide reads, in one-letter code: MADAFTDEQIQEFYEAFCLIDKDSDGFITKEKLTKVMKSMGKNPKAEQLQQMMSDVDIFGNGGITFDDFLYIMAQNTSQESASDELIEVFRVFDRDGDGLISQLELGEGMKDMGMKITAEEAEHMVREADLDGDGFLSFHEFSKMMIAASY.

EF-hand domains lie at E8–N43, P44–Q79, S81–K116, and I117–Y151. Ca(2+)-binding residues include D94, D96, D98, E105, D130, D132, D134, and E141.

This sequence belongs to the calmodulin family. In terms of assembly, interacts with IQD1. Interacts with ILK1. Binds to ABCG36. As to expression, expressed in leaves, flowers and siliques.

Potential calcium sensor. The protein is Calmodulin-like protein 9 of Arabidopsis thaliana (Mouse-ear cress).